The chain runs to 108 residues: Class I hydrophobin hgfII (108 aa).

The signal sequence occupies residues 1–19 (MFSRIAAVSFLALPLLAAA). Intrachain disulfides connect C28–C89, C35–C83, C36–C69, and C90–C103. N92 carries N-linked (GlcNAc...) asparagine glycosylation.

It belongs to the fungal hydrophobin family. As to quaternary structure, self-assembles to form functional amyloid fibrils called rodlets with a diameter of 15-30 nm. Self-assembly into fibrillar rodlets occurs spontaneously at hydrophobic:hydrophilic interfaces and the rodlets further associate laterally to form amphipathic monolayers. Highky expressed in hyphae cultured in liquid medium.

The protein localises to the secreted. It is found in the cell wall. In terms of biological role, aerial growth, conidiation, and dispersal of filamentous fungi in the environment rely upon a capability of their secreting small amphipathic proteins called hydrophobins (HPBs) with low sequence identity. Class I can self-assemble into an outermost layer of rodlet bundles on aerial cell surfaces, conferring cellular hydrophobicity that supports fungal growth, development and dispersal; whereas Class II form highly ordered films at water-air interfaces through intermolecular interactions but contribute nothing to the rodlet structure. HgfII is a class I hydrophobin that is involved in cell surface hydrophobicity and might play a key role during the growth and development of hyphae cultured in liquid medium. This chain is Class I hydrophobin hgfII, found in Grifola frondosa (Maitake).